A 186-amino-acid polypeptide reads, in one-letter code: Putative 5'(3')-deoxyribonucleotidase (186 aa).

The protein belongs to the 5'(3')-deoxyribonucleotidase family. Mg(2+) is required as a cofactor.

Dephosphorylates the 5' and 2'(3')-phosphates of deoxyribonucleotides. This Bordetella parapertussis (strain 12822 / ATCC BAA-587 / NCTC 13253) protein is Putative 5'(3')-deoxyribonucleotidase.